We begin with the raw amino-acid sequence, 514 residues long: Maturase K (514 aa).

Belongs to the intron maturase 2 family. MatK subfamily.

The protein resides in the plastid. The protein localises to the chloroplast. In terms of biological role, usually encoded in the trnK tRNA gene intron. Probably assists in splicing its own and other chloroplast group II introns. The chain is Maturase K from Acer monspessulanum (Montpellier maple).